The following is an 80-amino-acid chain: Conotoxin Cl11.2 (80 aa).

A signal peptide spans 1–19 (MKMSVTFLLILMILPLFTG). Positions 20–41 (EWQSGSRLSALKKRLLEKRLLQ) are excised as a propeptide. 4 disulfide bridges follow: cysteine 45–cysteine 59, cysteine 52–cysteine 63, cysteine 58–cysteine 68, and cysteine 62–cysteine 74.

The protein belongs to the conotoxin I1 superfamily. Expressed by the venom duct.

It is found in the secreted. The polypeptide is Conotoxin Cl11.2 (Californiconus californicus (California cone)).